We begin with the raw amino-acid sequence, 298 residues long: GTPase Era (298 aa).

Positions 4–171 constitute an Era-type G domain; that stretch reads KSGFVSVIGR…LKEALDYIPE (168 aa). The tract at residues 12–19 is G1; it reads GRPNVGKS. 12 to 19 serves as a coordination point for GTP; sequence GRPNVGKS. Residues 38-42 form a G2 region; sequence QTTRN. Residues 59–62 form a G3 region; the sequence is DTPG. GTP is bound by residues 59 to 63 and 121 to 124; these read DTPGI and NKVD. Positions 121 to 124 are G4; it reads NKVD. The interval 150-152 is G5; that stretch reads ISA. The region spanning 202-279 is the KH type-2 domain; that stretch reads LDDEVPHGVG…FLELWVKVKP (78 aa).

It belongs to the TRAFAC class TrmE-Era-EngA-EngB-Septin-like GTPase superfamily. Era GTPase family. Monomer.

The protein localises to the cytoplasm. The protein resides in the cell membrane. In terms of biological role, an essential GTPase that binds both GDP and GTP, with rapid nucleotide exchange. Plays a role in 16S rRNA processing and 30S ribosomal subunit biogenesis and possibly also in cell cycle regulation and energy metabolism. The protein is GTPase Era of Ruminiclostridium cellulolyticum (strain ATCC 35319 / DSM 5812 / JCM 6584 / H10) (Clostridium cellulolyticum).